The primary structure comprises 476 residues: Growth/differentiation factor 10 (476 aa).

The first 29 residues, 1–29 (MAPGPARISLGSQLLPMVPLLLLLRGAGC), serve as a signal peptide directing secretion. Residues 30–366 (GHRGPSWSSL…EKTMQKARRR (337 aa)) constitute a propeptide that is removed on maturation. Residues 39–63 (LPSAAAGLQGDRDSQQSPGDAAAAL) are disordered. N114, N152, and N277 each carry an N-linked (GlcNAc...) asparagine glycan. Residues 268–301 (GDFEPGAAPNSSADPRVRRAAQVSKPLQDNELPG) are disordered. 3 disulfides stabilise this stretch: C374–C441, C403–C473, and C407–C475. N467 carries N-linked (GlcNAc...) asparagine glycosylation.

Belongs to the TGF-beta family. Homodimer or heterodimer. Can form a non-covalent complex of the mature region and the pro-region. In terms of tissue distribution, highly expressed in epididymal adipose tissue, brain, bone and aorta and to a lesser extent in liver and spleen. Expressed at higher levels in preadipocytes than in mature adipocytes. Strongly expressed in glial cells of the cerebellum.

Its subcellular location is the secreted. In terms of biological role, growth factor involved in osteogenesis and adipogenesis. Plays an inhibitory role in the process of osteoblast differentiation via SMAD2/3 pathway. Plays an inhibitory role in the process of adipogenesis. The chain is Growth/differentiation factor 10 from Mus musculus (Mouse).